Consider the following 83-residue polypeptide: ATP synthase subunit c (83 aa).

2 helical membrane passes run 10-30 and 52-72; these read IAVALLIGMGALGTAIGFGLL and MFIVAGLLDAVTMIGVGIALY.

Belongs to the ATPase C chain family. F-type ATPases have 2 components, F(1) - the catalytic core - and F(0) - the membrane proton channel. F(1) has five subunits: alpha(3), beta(3), gamma(1), delta(1), epsilon(1). F(0) has three main subunits: a(1), b(2) and c(10-14). The alpha and beta chains form an alternating ring which encloses part of the gamma chain. F(1) is attached to F(0) by a central stalk formed by the gamma and epsilon chains, while a peripheral stalk is formed by the delta and b chains.

It is found in the cell inner membrane. In terms of biological role, f(1)F(0) ATP synthase produces ATP from ADP in the presence of a proton or sodium gradient. F-type ATPases consist of two structural domains, F(1) containing the extramembraneous catalytic core and F(0) containing the membrane proton channel, linked together by a central stalk and a peripheral stalk. During catalysis, ATP synthesis in the catalytic domain of F(1) is coupled via a rotary mechanism of the central stalk subunits to proton translocation. Key component of the F(0) channel; it plays a direct role in translocation across the membrane. A homomeric c-ring of between 10-14 subunits forms the central stalk rotor element with the F(1) delta and epsilon subunits. The sequence is that of ATP synthase subunit c from Shewanella denitrificans (strain OS217 / ATCC BAA-1090 / DSM 15013).